A 447-amino-acid chain; its full sequence is Cysteine--tRNA ligase (447 aa).

Residue cysteine 28 participates in Zn(2+) binding. The 'HIGH' region motif lies at 30–40 (PTVYNYIHIGN). 3 residues coordinate Zn(2+): cysteine 211, histidine 236, and glutamate 240. Positions 268 to 272 (KMSKS) match the 'KMSKS' region motif. Lysine 271 provides a ligand contact to ATP.

This sequence belongs to the class-I aminoacyl-tRNA synthetase family. In terms of assembly, monomer. It depends on Zn(2+) as a cofactor.

The protein resides in the cytoplasm. The enzyme catalyses tRNA(Cys) + L-cysteine + ATP = L-cysteinyl-tRNA(Cys) + AMP + diphosphate. In Streptococcus pyogenes serotype M3 (strain ATCC BAA-595 / MGAS315), this protein is Cysteine--tRNA ligase.